A 150-amino-acid chain; its full sequence is Arginine repressor (150 aa).

It belongs to the ArgR family.

It is found in the cytoplasm. It participates in amino-acid biosynthesis; L-arginine biosynthesis [regulation]. Functionally, regulates arginine biosynthesis genes. This is Arginine repressor from Staphylococcus saprophyticus subsp. saprophyticus (strain ATCC 15305 / DSM 20229 / NCIMB 8711 / NCTC 7292 / S-41).